We begin with the raw amino-acid sequence, 159 residues long: SsrA-binding protein (159 aa).

The protein belongs to the SmpB family.

The protein resides in the cytoplasm. Required for rescue of stalled ribosomes mediated by trans-translation. Binds to transfer-messenger RNA (tmRNA), required for stable association of tmRNA with ribosomes. tmRNA and SmpB together mimic tRNA shape, replacing the anticodon stem-loop with SmpB. tmRNA is encoded by the ssrA gene; the 2 termini fold to resemble tRNA(Ala) and it encodes a 'tag peptide', a short internal open reading frame. During trans-translation Ala-aminoacylated tmRNA acts like a tRNA, entering the A-site of stalled ribosomes, displacing the stalled mRNA. The ribosome then switches to translate the ORF on the tmRNA; the nascent peptide is terminated with the 'tag peptide' encoded by the tmRNA and targeted for degradation. The ribosome is freed to recommence translation, which seems to be the essential function of trans-translation. In Coxiella burnetii (strain CbuG_Q212) (Coxiella burnetii (strain Q212)), this protein is SsrA-binding protein.